A 127-amino-acid polypeptide reads, in one-letter code: MDVFKKGFSIAKEGVVGAVEKTKQGVTEAAEKTKEGVMYVGAKTKENVVQSVTSVAEKTKEQANAVSEAVVSSVNTVATKTVEEAENIAVTSGVVRKEDLRPSAPQQEGEASKEKEEVAEEAQSGGD.

2 consecutive repeat copies span residues 20–30 and 31–41. The tract at residues 20–67 is 4 X 11 AA tandem repeats of [EGSA]-K-T-K-[EQ]-[GQ]-V-X(4); that stretch reads EKTKQGVTEAAEKTKEGVMYVGAKTKENVVQSVTSVAEKTKEQANAVS. The stretch at 42–56 is one 3; approximate repeat; the sequence is AKTKENVVQSVTSVA. Residues 57–67 form repeat 4; sequence EKTKEQANAVS. Residues Ser-67 and Ser-72 each carry the phosphoserine modification. Residues 96 to 127 are disordered; that stretch reads RKEDLRPSAPQQEGEASKEKEEVAEEAQSGGD. A Phosphoserine; by BARK1, CaMK2 and CK2 modification is found at Ser-124.

It belongs to the synuclein family. As to quaternary structure, may be a centrosome-associated protein. Interacts with MYOC; affects its secretion and its aggregation. In terms of processing, phosphorylated. Phosphorylation by GRK5 appears to occur on residues distinct from the residue phosphorylated by other kinases. As to expression, highly expressed in brain, particularly in the substantia nigra. Also expressed in the corpus callosum, heart, skeletal muscle, ovary, testis, colon and spleen. Weak expression in pancreas, kidney and lung.

It is found in the cytoplasm. Its subcellular location is the perinuclear region. It localises to the cytoskeleton. The protein resides in the microtubule organizing center. The protein localises to the centrosome. It is found in the spindle. Plays a role in neurofilament network integrity. May be involved in modulating axonal architecture during development and in the adult. In vitro, increases the susceptibility of neurofilament-H to calcium-dependent proteases. May also function in modulating the keratin network in skin. Activates the MAPK and Elk-1 signal transduction pathway. The sequence is that of Gamma-synuclein (SNCG) from Homo sapiens (Human).